We begin with the raw amino-acid sequence, 63 residues long: Protein virE1 (63 aa).

In terms of assembly, forms heterodimers with virE2 that prevent virE2 anarchic homopolymerization and binding to DNA.

Its function is as follows. Involved in DNA transformation; controls virE2 polymerization and prevents virE2 binding to DNA. This chain is Protein virE1 (virE1), found in Agrobacterium fabrum (strain C58 / ATCC 33970) (Agrobacterium tumefaciens (strain C58)).